A 675-amino-acid chain; its full sequence is G-protein-signaling modulator 1 (675 aa).

A mediates association with membranes region spans residues 1-509 (MAGPAPPVAD…DLLTKFQSSR (509 aa)). TPR repeat units follow at residues 28 to 61 (CLEL…GTED), 66 to 99 (SAIY…ARTI), 106 to 139 (AKAS…AQEQ), 146 to 181 (ARAL…PPDV), 183 to 202 (ETLC…VKEL), 209 to 242 (GRAY…AKEF), 249 to 282 (RRAY…SRQL), 289 to 322 (AQAC…AQEL), and 329 to 362 (GRAC…SQEI). The interval 364–487 (DRHGELTARM…VRVHVPRTSI (124 aa)) is interaction with STK11/LKB1. Positions 391–412 (SEKPDLAGYEAQGARPKRTQRL) are disordered. Position 413 is a phosphoserine (serine 413). Residue arginine 421 is modified to Omega-N-methylarginine. Residues 424–442 (LEREQNGDSHHSGDWRGPS) are compositionally biased toward basic and acidic residues. A disordered region spans residues 424–492 (LEREQNGDSH…PRTSIPRAPS (69 aa)). 5 positions are modified to phosphoserine: serine 445, serine 469, serine 471, serine 492, and serine 493. A compositionally biased stretch (basic and acidic residues) spans 454–469 (KYQEGPDAERRPREGS). The GoLoco 1 domain maps to 495-517 (EECFFDLLTKFQSSRMDDQRCPL). 2 positions are modified to phosphoserine: serine 545 and serine 569. GoLoco domains lie at 548–570 (TEEF…RASV), 596–618 (GDDF…RCPP), and 630–652 (DEDF…RVDL). Disordered stretches follow at residues 610-630 (RIDD…TMPD) and 644-675 (RMDE…PGAS).

It belongs to the GPSM family. As to quaternary structure, interacts with GNAI1, GNAI2 and GNAI3 preferentially in their GDP-bound state. May also interact with GNAO1. Interacts with STK11/LKB1 and MACF1. Interacts with INSC/inscuteable and FRMPD1. Post-translationally, phosphorylation regulates interaction with G(i/o) alpha. As to expression, expressed in intestinal cells.

The protein resides in the cytoplasm. It is found in the cytosol. The protein localises to the endoplasmic reticulum membrane. It localises to the golgi apparatus membrane. Its subcellular location is the cell membrane. Its function is as follows. Guanine nucleotide dissociation inhibitor (GDI) which functions as a receptor-independent activator of heterotrimeric G-protein signaling. Keeps G(i/o) alpha subunit in its GDP-bound form thus uncoupling heterotrimeric G-proteins signaling from G protein-coupled receptors. Controls spindle orientation and asymmetric cell fate of cerebral cortical progenitors. May also be involved in macroautophagy in intestinal cells. May play a role in drug addiction. This chain is G-protein-signaling modulator 1 (GPSM1), found in Homo sapiens (Human).